Consider the following 173-residue polypeptide: Transcription factor E (173 aa).

The HTH TFE/IIEalpha-type domain occupies 9–92 (NNPATRAYIH…LWQLRIDLLY (84 aa)).

The protein belongs to the TFE family. Monomer. Interaction with RNA polymerase subunits RpoF and RpoE is necessary for Tfe stimulatory transcription activity. Able to interact with Tbp and RNA polymerase in the absence of DNA promoter. Interacts both with the preinitiation and elongation complexes.

In terms of biological role, transcription factor that plays a role in the activation of archaeal genes transcribed by RNA polymerase. Facilitates transcription initiation by enhancing TATA-box recognition by TATA-box-binding protein (Tbp), and transcription factor B (Tfb) and RNA polymerase recruitment. Not absolutely required for transcription in vitro, but particularly important in cases where Tbp or Tfb function is not optimal. It dynamically alters the nucleic acid-binding properties of RNA polymerases by stabilizing the initiation complex and destabilizing elongation complexes. Seems to translocate with the RNA polymerase following initiation and acts by binding to the non template strand of the transcription bubble in elongation complexes. The chain is Transcription factor E from Methanoregula boonei (strain DSM 21154 / JCM 14090 / 6A8).